A 428-amino-acid polypeptide reads, in one-letter code: GTPase Obg (428 aa).

An Obg domain is found at 1–158; sequence MFVDQVKIYV…RDVILELKVL (158 aa). A disordered region spans residues 117-145; that stretch reads ARGGRGGRGNSRFATPTNPAPEIAENGEP. The 171-residue stretch at 159 to 329 folds into the OBG-type G domain; it reads ADVGLVGFPS…LLFEVANLLE (171 aa). GTP contacts are provided by residues 165-172, 190-194, 212-215, 282-285, and 310-312; these read GFPSVGKS, FTTIV, DLPG, NKMD, and SAV. Positions 172 and 192 each coordinate Mg(2+). The OCT domain occupies 350–428; the sequence is KLETEGVKFD…ILEYEFEFID (79 aa).

This sequence belongs to the TRAFAC class OBG-HflX-like GTPase superfamily. OBG GTPase family. As to quaternary structure, monomer. It depends on Mg(2+) as a cofactor.

It is found in the cytoplasm. Functionally, an essential GTPase which binds GTP, GDP and possibly (p)ppGpp with moderate affinity, with high nucleotide exchange rates and a fairly low GTP hydrolysis rate. Plays a role in control of the cell cycle, stress response, ribosome biogenesis and in those bacteria that undergo differentiation, in morphogenesis control. This is GTPase Obg from Bacillus cereus (strain ATCC 10987 / NRS 248).